The following is a 63-amino-acid chain: DEPTTDLPICEQAFGDAGLCFGYMKLYSYNQETKNCEEFIYGGCQGNDNRFSTLAECEQKCIN.

The 52-residue stretch at 10 to 61 (CEQAFGDAGLCFGYMKLYSYNQETKNCEEFIYGGCQGNDNRFSTLAECEQKC) folds into the BPTI/Kunitz inhibitor domain. 3 disulfides stabilise this stretch: cysteine 10–cysteine 61, cysteine 20–cysteine 44, and cysteine 36–cysteine 57.

Its function is as follows. Inhibits chymotrypsin and thus avoids the accidental chymotrypsin-mediated activation of prophenoloxidase. This enzyme is required by the insect immune system to produce melanin which is used to engulf foreign objects. In Bombyx mori (Silk moth), this protein is Chymotrypsin inhibitor SCI-III.